Reading from the N-terminus, the 223-residue chain is Glycerol-3-phosphate acyltransferase (223 aa).

5 helical membrane-spanning segments follow: residues 2 to 22, 52 to 72, 78 to 98, 112 to 132, and 153 to 173; these read LEIL…GLVI, WGVA…WLAF, PVFV…SCFM, IFLP…MLVI, and LAVS…AVVV. Residues 191-223 form a disordered region; that stretch reads WLKSKNKGAAAGNAAEGDDTQNMNPQDAGRKDG.

The protein belongs to the PlsY family. In terms of assembly, probably interacts with PlsX.

The protein resides in the cell inner membrane. The catalysed reaction is an acyl phosphate + sn-glycerol 3-phosphate = a 1-acyl-sn-glycero-3-phosphate + phosphate. It participates in lipid metabolism; phospholipid metabolism. In terms of biological role, catalyzes the transfer of an acyl group from acyl-phosphate (acyl-PO(4)) to glycerol-3-phosphate (G3P) to form lysophosphatidic acid (LPA). This enzyme utilizes acyl-phosphate as fatty acyl donor, but not acyl-CoA or acyl-ACP. The sequence is that of Glycerol-3-phosphate acyltransferase from Desulfovibrio desulfuricans (strain ATCC 27774 / DSM 6949 / MB).